We begin with the raw amino-acid sequence, 1560 residues long: BRD4-interacting chromatin-remodeling complex-associated protein (1560 aa).

Disordered regions lie at residues 53–99, 624–688, 723–949, 974–1028, 1049–1075, and 1215–1300; these read VQEA…GADQ, APQA…ATPT, IVSA…VTTP, NKAG…TGLP, KAAS…KPPT, and SSEG…IKTY. Positions 86 to 96 are enriched in gly residues; sequence ATGGGGGGSGG. Over residues 624-664 the composition is skewed to low complexity; the sequence is APQAPPAVSTPLPLGLQQPQAQQPPQAPTPQAAAPPQATTP. Residues 726–736 show a composition bias toward pro residues; the sequence is APPPAQDPAPA. Residues 747–780 show a composition bias toward low complexity; that stretch reads PQAPDSQASPAPAPQIPAAAPLKGPGPSSSPSLP. Composition is skewed to pro residues over residues 791 to 806, 814 to 831, and 843 to 880; these read LPSP…PPSR, PSEP…PPTL, and VPPP…PHLP. The segment covering 881–896 has biased composition (low complexity); that stretch reads PSSTSSAVASSSETSS. Serine 919 bears the Phosphoserine mark. Phosphothreonine is present on threonine 921. Pro residues predominate over residues 932 to 941; that stretch reads PAAPPPPPPR. A compositionally biased stretch (low complexity) spans 1005–1028; it reads APSGTPTAPSHAPAPAPMAATGLP. Lysine 1057 is modified (N6-acetyllysine). A compositionally biased stretch (polar residues) spans 1227–1236; it reads LSSSAPGAST. Residues 1264 to 1281 show a composition bias toward low complexity; it reads ASSSLSSSSSSSSAASSL. A Glycyl lysine isopeptide (Lys-Gly) (interchain with G-Cter in SUMO2) cross-link involves residue lysine 1313. Disordered stretches follow at residues 1324 to 1424 and 1440 to 1560; these read NTAL…VDEA and YQRM…TLTR. A compositionally biased stretch (pro residues) spans 1331–1356; sequence HQPPPPPATLKVAEPPPRPPPPPPPT. Positions 1401–1412 are enriched in low complexity; the sequence is PEGTPAGRARGG. Serine 1413 is subject to Phosphoserine. Positions 1485–1515 are enriched in polar residues; the sequence is ASFSSDSPQDDTLTEHLQSAIDSILNLQQAP.

Component of the multiprotein chromatin-remodeling complexes SWI/SNF: SWI/SNF-A (BAF), SWI/SNF-B (PBAF) and related complexes. The canonical complex contains a catalytic subunit (either SMARCA4/BRG1/BAF190A or SMARCA2/BRM/BAF190B) and at least SMARCE1, ACTL6A/BAF53, SMARCC1/BAF155, SMARCC2/BAF170, and SMARCB1/SNF5/BAF47. Other subunits specific to each of the complexes may also be present permitting several possible combinations developmentally and tissue specific. Component of the SWI/SNF (GBAF) subcomplex, which includes at least BICRA or BICRAL (mutually exclusive), BRD9, SS18, the core BAF subunits, SMARCA2/BRM, SMARCA4/BRG1/BAF190A, ACTL6A/BAF53, SMARCC1/BAF155, and SMARCD1/BAF60A. Interacts with BRD4; the interaction bridges BRD4 to the GBAF complex. Expressed at moderate levels in heart, brain, placenta, skeletal muscle, and pancreas, and at lower levels in lung, liver and kidney.

It localises to the nucleus. Its function is as follows. Component of SWI/SNF chromatin remodeling subcomplex GBAF that carries out key enzymatic activities, changing chromatin structure by altering DNA-histone contacts within a nucleosome in an ATP-dependent manner. May play a role in BRD4-mediated gene transcription. In Homo sapiens (Human), this protein is BRD4-interacting chromatin-remodeling complex-associated protein.